The sequence spans 143 residues: Large ribosomal subunit protein bL17 (143 aa).

Residues 124 to 133 (GAGDRARLEA) are compositionally biased toward basic and acidic residues. The segment at 124 to 143 (GAGDRARLEAEGTDAEAAAA) is disordered.

This sequence belongs to the bacterial ribosomal protein bL17 family. Part of the 50S ribosomal subunit. Contacts protein L32.

The protein is Large ribosomal subunit protein bL17 of Mesorhizobium japonicum (strain LMG 29417 / CECT 9101 / MAFF 303099) (Mesorhizobium loti (strain MAFF 303099)).